Consider the following 293-residue polypeptide: tRNA pseudouridine synthase B (293 aa).

Asp-40 functions as the Nucleophile in the catalytic mechanism.

This sequence belongs to the pseudouridine synthase TruB family. Type 1 subfamily.

It carries out the reaction uridine(55) in tRNA = pseudouridine(55) in tRNA. Responsible for synthesis of pseudouridine from uracil-55 in the psi GC loop of transfer RNAs. The sequence is that of tRNA pseudouridine synthase B from Mycolicibacterium paratuberculosis (strain ATCC BAA-968 / K-10) (Mycobacterium paratuberculosis).